Reading from the N-terminus, the 109-residue chain is MEVKAIHRGARISAQKTRLVADQIRGLPIERALNILAFSPKKAAGIVKKVVESAIANAEHNEGADIDELKVKSIFVDKATSLKRFTARAKGRGNRIEKQTCHITVTLGN.

This sequence belongs to the universal ribosomal protein uL22 family. As to quaternary structure, part of the 50S ribosomal subunit.

In terms of biological role, this protein binds specifically to 23S rRNA; its binding is stimulated by other ribosomal proteins, e.g. L4, L17, and L20. It is important during the early stages of 50S assembly. It makes multiple contacts with different domains of the 23S rRNA in the assembled 50S subunit and ribosome. Functionally, the globular domain of the protein is located near the polypeptide exit tunnel on the outside of the subunit, while an extended beta-hairpin is found that lines the wall of the exit tunnel in the center of the 70S ribosome. This chain is Large ribosomal subunit protein uL22, found in Cupriavidus metallidurans (strain ATCC 43123 / DSM 2839 / NBRC 102507 / CH34) (Ralstonia metallidurans).